The chain runs to 88 residues: Protein alpha-1 (88 aa).

Residues 38 to 58 (GFWIILIILLGILAIRIAIKV) form a helical membrane-spanning segment.

It is found in the membrane. The protein is Protein alpha-1 (alpha) of Bos taurus (Bovine).